We begin with the raw amino-acid sequence, 901 residues long: Core protein VP3 (901 aa).

This sequence belongs to the orbivirus VP3 family.

Its subcellular location is the virion. Its function is as follows. The VP3 protein is one of the five proteins (with VP1, VP4, VP6 and VP7) which form the inner capsid of the virus. The polypeptide is Core protein VP3 (Segment-3) (Bluetongue virus 11 (isolate USA) (BTV 11)).